The chain runs to 271 residues: Ribosomal RNA small subunit methyltransferase A (271 aa).

6 residues coordinate S-adenosyl-L-methionine: Asn-18, Leu-20, Gly-45, Glu-66, Asp-91, and Asn-112.

The protein belongs to the class I-like SAM-binding methyltransferase superfamily. rRNA adenine N(6)-methyltransferase family. RsmA subfamily.

It is found in the cytoplasm. It catalyses the reaction adenosine(1518)/adenosine(1519) in 16S rRNA + 4 S-adenosyl-L-methionine = N(6)-dimethyladenosine(1518)/N(6)-dimethyladenosine(1519) in 16S rRNA + 4 S-adenosyl-L-homocysteine + 4 H(+). In terms of biological role, specifically dimethylates two adjacent adenosines (A1518 and A1519) in the loop of a conserved hairpin near the 3'-end of 16S rRNA in the 30S particle. May play a critical role in biogenesis of 30S subunits. The polypeptide is Ribosomal RNA small subunit methyltransferase A (Vibrio atlanticus (strain LGP32) (Vibrio splendidus (strain Mel32))).